An 87-amino-acid polypeptide reads, in one-letter code: UPF0386 protein RSKD131_0371 (87 aa).

This sequence belongs to the UPF0386 family.

This Cereibacter sphaeroides (strain KD131 / KCTC 12085) (Rhodobacter sphaeroides) protein is UPF0386 protein RSKD131_0371.